The primary structure comprises 321 residues: MIFLFRALKPLLVLALLTVVFVLGGCSNASVLDPKGPVAEQQSDLILLSIGFMLFIVGVVFVLFTIILVKYRDRKGKDNGSYNPKIHGNTFLEVVWTVIPILIVIALSVPTVQTIYSLEKAPEATKDKEPLVVHATSVDWKWVFSYPEQDIETVNYLNIPVDRPILFKISSADSMASLWIPQLGGQKYAMAGMLMDQYLQADEVGTYQGRNANFTGEHFADQEFDVNAVTEKDFNSWVKKTQNEAPKLTKEKYDQLMLPENVDELTFSSTHLKYVDHGQDAEYAMEARKRLGYQAVSPHSKTDPFENVKENEFKKSDDTEE.

The first 25 residues, 1–25 (MIFLFRALKPLLVLALLTVVFVLGG), serve as a signal peptide directing secretion. The N-palmitoyl cysteine moiety is linked to residue Cys26. Cys26 carries S-diacylglycerol cysteine lipidation. 2 consecutive transmembrane segments (helical) span residues 49–69 (SIGF…IILV) and 90–110 (TFLE…LSVP). The segment at 294–321 (QAVSPHSKTDPFENVKENEFKKSDDTEE) is disordered. The span at 300 to 321 (SKTDPFENVKENEFKKSDDTEE) shows a compositional bias: basic and acidic residues.

Belongs to the cytochrome c oxidase subunit 2 family.

It localises to the cell membrane. It carries out the reaction 2 a quinol + O2 = 2 a quinone + 2 H2O. Its function is as follows. Catalyzes quinol oxidation with the concomitant reduction of oxygen to water. Major component for energy conversion during vegetative growth. Subunit II transfers the electrons from a quinol to the binuclear center of the catalytic subunit I. This is Quinol oxidase subunit 2 (qoxA) from Bacillus spizizenii (strain ATCC 23059 / NRRL B-14472 / W23) (Bacillus subtilis subsp. spizizenii).